The following is a 425-amino-acid chain: Protein PTI1 (425 aa).

At S272 the chain carries Phosphoserine.

Component of the cleavage and polyadenylation factor (CPF) complex, which is composed of PTI1, SYC1, SSU72, GLC7, MPE1, REF2, PFS2, PTA1, YSH1/BRR5, SWD2, CFT2/YDH1, YTH1, CFT1/YHH1, FIP1 and PAP1. Component of the APT complex, which is a subcomplex of CPF, and is composed of PTI1, SYC1, SSU72, GLC7, REF2, PTA1 and SWD2.

It localises to the nucleus. In terms of biological role, component of the cleavage and polyadenylation factor (CPF) complex, which plays a key role in polyadenylation-dependent pre-mRNA 3'-end formation and cooperates with cleavage factors including the CFIA complex and NAB4/CFIB. Component of the APT complex, which may be involved in polyadenylation-independent transcript 3'-end formation. PTI1 is required for 3'-end formation of snoRNAs. This is Protein PTI1 (PTI1) from Saccharomyces cerevisiae (strain ATCC 204508 / S288c) (Baker's yeast).